The chain runs to 338 residues: Ketol-acid reductoisomerase (NADP(+)) (338 aa).

One can recognise a KARI N-terminal Rossmann domain in the interval 1–181 (MKIYYDKDCN…GGGKAGIIET (181 aa)). NADP(+) is bound by residues 24–27 (YGSQ), lysine 47, serine 50, serine 52, and 82–85 (DEIQ). Histidine 107 is a catalytic residue. Glycine 133 serves as a coordination point for NADP(+). Residues 182–327 (SFKEETETDL…ARLRSMMAWI (146 aa)) form the KARI C-terminal knotted domain. Residues aspartate 190, glutamate 194, glutamate 226, and glutamate 230 each contribute to the Mg(2+) site. Residue serine 251 coordinates substrate.

Belongs to the ketol-acid reductoisomerase family. Requires Mg(2+) as cofactor.

It carries out the reaction (2R)-2,3-dihydroxy-3-methylbutanoate + NADP(+) = (2S)-2-acetolactate + NADPH + H(+). The catalysed reaction is (2R,3R)-2,3-dihydroxy-3-methylpentanoate + NADP(+) = (S)-2-ethyl-2-hydroxy-3-oxobutanoate + NADPH + H(+). It functions in the pathway amino-acid biosynthesis; L-isoleucine biosynthesis; L-isoleucine from 2-oxobutanoate: step 2/4. It participates in amino-acid biosynthesis; L-valine biosynthesis; L-valine from pyruvate: step 2/4. Functionally, involved in the biosynthesis of branched-chain amino acids (BCAA). Catalyzes an alkyl-migration followed by a ketol-acid reduction of (S)-2-acetolactate (S2AL) to yield (R)-2,3-dihydroxy-isovalerate. In the isomerase reaction, S2AL is rearranged via a Mg-dependent methyl migration to produce 3-hydroxy-3-methyl-2-ketobutyrate (HMKB). In the reductase reaction, this 2-ketoacid undergoes a metal-dependent reduction by NADPH to yield (R)-2,3-dihydroxy-isovalerate. This chain is Ketol-acid reductoisomerase (NADP(+)), found in Geotalea uraniireducens (strain Rf4) (Geobacter uraniireducens).